Consider the following 166-residue polypeptide: Glutamyl-tRNA(Gln) amidotransferase subunit C-2, mitochondrial (166 aa).

It belongs to the GatC family. Subunit of the heterotrimeric GatCAB amidotransferase (AdT) complex, composed of A, B and C subunits.

Its subcellular location is the mitochondrion. It carries out the reaction L-glutamyl-tRNA(Gln) + L-glutamine + ATP + H2O = L-glutaminyl-tRNA(Gln) + L-glutamate + ADP + phosphate + H(+). Its function is as follows. Allows the formation of correctly charged Gln-tRNA(Gln) through the transamidation of misacylated Glu-tRNA(Gln) in the mitochondria. The reaction takes place in the presence of glutamine and ATP through an activated gamma-phospho-Glu-tRNA(Gln). The chain is Glutamyl-tRNA(Gln) amidotransferase subunit C-2, mitochondrial from Culex quinquefasciatus (Southern house mosquito).